Here is a 477-residue protein sequence, read N- to C-terminus: Aspartyl/glutamyl-tRNA(Asn/Gln) amidotransferase subunit B (477 aa).

It belongs to the GatB/GatE family. GatB subfamily. As to quaternary structure, heterotrimer of A, B and C subunits.

The enzyme catalyses L-glutamyl-tRNA(Gln) + L-glutamine + ATP + H2O = L-glutaminyl-tRNA(Gln) + L-glutamate + ADP + phosphate + H(+). It catalyses the reaction L-aspartyl-tRNA(Asn) + L-glutamine + ATP + H2O = L-asparaginyl-tRNA(Asn) + L-glutamate + ADP + phosphate + 2 H(+). Functionally, allows the formation of correctly charged Asn-tRNA(Asn) or Gln-tRNA(Gln) through the transamidation of misacylated Asp-tRNA(Asn) or Glu-tRNA(Gln) in organisms which lack either or both of asparaginyl-tRNA or glutaminyl-tRNA synthetases. The reaction takes place in the presence of glutamine and ATP through an activated phospho-Asp-tRNA(Asn) or phospho-Glu-tRNA(Gln). The sequence is that of Aspartyl/glutamyl-tRNA(Asn/Gln) amidotransferase subunit B from Legionella pneumophila (strain Lens).